The following is a 1203-amino-acid chain: Partitioning defective 3 homolog B (1203 aa).

Disordered stretches follow at residues 79–104 and 138–162; these read FDEQEPLQKTESPGGNPADRQSPDAF and RRSSDPAPGPHADAQPSTASLSGQS. Serine 100 is modified (phosphoserine). The span at 152-162 shows a compositional bias: polar residues; that stretch reads QPSTASLSGQS. The PDZ 1 domain maps to 201–289; sequence TRAVEISGEG…SPSVILHVLL (89 aa). Residues 334 to 374 are disordered; sequence TRASSPEGEEPASPQQSKSPRVPRLGRKPSSPSLSPLMGFG. 3 positions are modified to phosphoserine: serine 346, serine 352, and serine 368. PDZ domains lie at 383-468 and 496-585; these read KIDL…VIAR and TLEI…GMIQ. Serine 635, serine 710, serine 728, serine 730, serine 746, serine 749, and serine 801 each carry phosphoserine. Basic and acidic residues predominate over residues 718 to 732; sequence GKVQSLADRRSDSPG. Positions 718 to 743 are disordered; sequence GKVQSLADRRSDSPGKDFGPTLGLKK. Disordered stretches follow at residues 787-927, 968-994, and 1050-1203; these read KSYD…EKQA, VFRSPSPLRAGPLAYPRDGRPLSPDHL, and RPSD…TAAV. At threonine 810 the chain carries Phosphothreonine. Residues 827–842 are compositionally biased toward basic and acidic residues; sequence VENKAKNIKKTKEKEK. Basic residues predominate over residues 843–854; the sequence is KKGKGKLKVKEK. Basic and acidic residues-rich tracts occupy residues 855 to 865, 881 to 893, 906 to 927, and 984 to 994; these read KLKEEHEDAER, KKDDKVGKAEQKG, ERMKEERERIGAKHQELREKQA, and RDGRPLSPDHL. Phosphoserine occurs at positions 1088 and 1182.

It belongs to the PAR3 family. As to quaternary structure, interacts with PARD6B. Interacts with INSC/inscuteable.

The protein localises to the endomembrane system. It localises to the cell junction. It is found in the tight junction. Its function is as follows. Putative adapter protein involved in asymmetrical cell division and cell polarization processes. May play a role in the formation of epithelial tight junctions. This chain is Partitioning defective 3 homolog B (Pard3b), found in Mus musculus (Mouse).